The chain runs to 305 residues: Transmembrane epididymal protein 1A (305 aa).

A helical transmembrane segment spans residues 4–24 (FIGHISPGLFLVFYGLYQAVI). N-linked (GlcNAc...) asparagine glycosylation is present at asparagine 32. The next 5 membrane-spanning stretches (helical) occupy residues 54–74 (IAHAGWLKVVIGSLLIVYEIS), 124–144 (CVLLERGATVLGVYVLLLLLV), 159–179 (SLLILVVFLLMLVLTAELWAP), 187–207 (IETFLILIMGSWLIQAAFILF), and 223–243 (IMFVTTFFCWHVMINALCMLG). The tract at residues 285 to 305 (EQQDKDDQAPLLSKISPCDRA) is disordered.

This sequence belongs to the TMEM45 family.

It is found in the membrane. The polypeptide is Transmembrane epididymal protein 1A (Mus musculus (Mouse)).